A 330-amino-acid chain; its full sequence is Ribosomal RNA large subunit methyltransferase F (330 aa).

It belongs to the methyltransferase superfamily. METTL16/RlmF family.

The protein resides in the cytoplasm. The enzyme catalyses adenosine(1618) in 23S rRNA + S-adenosyl-L-methionine = N(6)-methyladenosine(1618) in 23S rRNA + S-adenosyl-L-homocysteine + H(+). Specifically methylates the adenine in position 1618 of 23S rRNA. In Pseudoalteromonas atlantica (strain T6c / ATCC BAA-1087), this protein is Ribosomal RNA large subunit methyltransferase F.